A 123-amino-acid polypeptide reads, in one-letter code: Large ribosomal subunit protein eL8 (123 aa).

This sequence belongs to the eukaryotic ribosomal protein eL8 family. As to quaternary structure, may be present in up to 3 copies per 70S ribosome. Part of the 50S ribosomal subunit, where it binds 23S rRNA at its canonical site near the L1 stalk, as well as a possible second 50S binding site near helix 25 and a possible third site on the beak of the 30S subunit. Component of box C/D small ribonucleoprotein (sRNP) particles that contain rpl7ae, FlpA and nop5, plus a guide RNA. These sRNP particles form homodimers, giving rise to an asymmetric holoenzyme. Probably part of the RNase P complex.

It is found in the cytoplasm. Functionally, multifunctional RNA-binding protein that recognizes the K-turn motif in ribosomal RNA, the RNA component of RNase P, box H/ACA, box C/D and box C'/D' sRNAs. Component of the 70S ribosome. Component of a box C/D small ribonucleoprotein (sRNP) particle that is involved in pre-rRNA and tRNA processing. Utilizes the methyl donor S-adenosyl-L-methionine to catalyze the site-specific 2'-hydroxyl methylation of ribose moieties in rRNA and tRNA. Site specificity is provided by a guide RNA that base pairs with the substrate. Methylation occurs at a characteristic distance from the sequence involved in base pairing with the guide RNA. The sequence is that of Large ribosomal subunit protein eL8 from Pyrococcus furiosus (strain ATCC 43587 / DSM 3638 / JCM 8422 / Vc1).